The primary structure comprises 536 residues: Probable cytochrome P450 520A1 (536 aa).

The chain crosses the membrane as a helical span at residues 1-21 (MEILTFIIYLITFFILFDFYK). Heme is bound at residue cysteine 479.

This sequence belongs to the cytochrome P450 family. Heme is required as a cofactor.

It is found in the membrane. This is Probable cytochrome P450 520A1 (cyp520A1) from Dictyostelium discoideum (Social amoeba).